Reading from the N-terminus, the 238-residue chain is Phosphoribosylaminoimidazole-succinocarboxamide synthase (238 aa).

Belongs to the SAICAR synthetase family.

It catalyses the reaction 5-amino-1-(5-phospho-D-ribosyl)imidazole-4-carboxylate + L-aspartate + ATP = (2S)-2-[5-amino-1-(5-phospho-beta-D-ribosyl)imidazole-4-carboxamido]succinate + ADP + phosphate + 2 H(+). It participates in purine metabolism; IMP biosynthesis via de novo pathway; 5-amino-1-(5-phospho-D-ribosyl)imidazole-4-carboxamide from 5-amino-1-(5-phospho-D-ribosyl)imidazole-4-carboxylate: step 1/2. The chain is Phosphoribosylaminoimidazole-succinocarboxamide synthase from Methanococcoides burtonii (strain DSM 6242 / NBRC 107633 / OCM 468 / ACE-M).